Reading from the N-terminus, the 276-residue chain is NH(3)-dependent NAD(+) synthetase (276 aa).

ATP is bound at residue 43–50; the sequence is GISGGVDS. Aspartate 49 is a binding site for Mg(2+). A deamido-NAD(+)-binding site is contributed by arginine 146. An ATP-binding site is contributed by threonine 166. Glutamate 171 is a binding site for Mg(2+). The deamido-NAD(+) site is built by lysine 179 and aspartate 186. The ATP site is built by lysine 195 and threonine 217. 266-267 provides a ligand contact to deamido-NAD(+); sequence HK.

The protein belongs to the NAD synthetase family. As to quaternary structure, homodimer.

It carries out the reaction deamido-NAD(+) + NH4(+) + ATP = AMP + diphosphate + NAD(+) + H(+). It functions in the pathway cofactor biosynthesis; NAD(+) biosynthesis; NAD(+) from deamido-NAD(+) (ammonia route): step 1/1. In terms of biological role, catalyzes the ATP-dependent amidation of deamido-NAD to form NAD. Uses ammonia as a nitrogen source. The protein is NH(3)-dependent NAD(+) synthetase of Vibrio campbellii (strain ATCC BAA-1116).